Here is a 1010-residue protein sequence, read N- to C-terminus: MYLDRFRQCPSSLQIPRSAWRLHALAAALALAGMARLAPAAAQAPQPPVAGAPHAQDAGQEGEFDHRDNTLIAVFDDGVGINLDDDPDELGETAPPTLKDIHISVEHKNPMSKPAIGVRVSGAGRALTLAGSTIDATEGGIPAVVRRGGTLELDGVTVAGGEGMEPMTVSDAGSRLSVRGGVLGGEAPGVGLVRAAQGGQASIIDATLQSILGPALIADGGSISVAGGSIDMDMGPGFPPPPPPLPGAPLAAHPPLDRVAAVHAGQDGKVTLREVALRAHGPQATGVYAYMPGSEITLQGGTVSVQGDDGAGVVAGAGLLDALPPGGTVRLDGTTVSTDGANTDAVLVRGDAARAEVVNTVLRTAKSLAAGVSAQHGGRVTLRQTRIETAGAGAEGISVLGFEPQSGSGPASVDMQGGSITTTGNRAAGIALTHGSARLEGVAVRAEGSGSSAAQLANGTLVVSAGSLASAQSGAISVTDTPLKLMPGALASSTVSVRLTDGATAQGGNGVFLQQHSTIPVAVALESGALARGDIVADGNKPLDAGISLSVASGAAWHGATQVLQSATLGKGGTWVVNADSRVQDMSMRGGRVEFQAPAPEASYKTLTLQTLDGNGVFVLNTNVAAGQNDQLRVTGRADGQHRVLVRNAGGEADSRGARLGLVHTQGQGNATFRLANVGKAVDLGTWRYSLAEDPKTHVWSLQRAGQALSGAANAAVNAADLSSIALAESNALDKRLGELRLRADAGGPWARTFSERQQISNRHARAYDQTVSGLEIGLDRGWSASGGRWYAGGLLGYTYADRTYPGDGGGKVKGLHVGGYAAYVGDGGYYLDTVLRLGRYDQQYNIAGTDGGRVTADYRTSGAAWSLEGGRRFELPNDWFAEPQAEVMLWRTSGKRYRASNGLRVKVDANTATLGRLGLRFGRRIALAGGNIVQPYARLGWTQEFKSTGDVRTNGIGHAGAGRHGRVELGAGVDAALGKGHNLYASYEYAAGDRINIPWSFHAGYRYSF.

The signal sequence occupies residues 1–42 (MYLDRFRQCPSSLQIPRSAWRLHALAAALALAGMARLAPAAA). The 269-residue stretch at 742–1010 (LRADAGGPWA…SFHAGYRYSF (269 aa)) folds into the Autotransporter domain.

The protein resides in the periplasm. Its subcellular location is the secreted. It is found in the cell surface. The protein localises to the cell outer membrane. In terms of biological role, inhibits the classical pathway of complement activation and prevents accumulation of deposited C4. This chain is BrkA autotransporter, found in Bordetella pertussis (strain Tohama I / ATCC BAA-589 / NCTC 13251).